A 448-amino-acid chain; its full sequence is Glutamyl-tRNA reductase (448 aa).

Substrate-binding positions include 49–52 (TCNR), serine 109, 114–116 (ETQ), and glutamine 120. Residue cysteine 50 is the Nucleophile of the active site. 189–194 (GAGEMS) is an NADP(+) binding site.

Belongs to the glutamyl-tRNA reductase family. Homodimer.

It carries out the reaction (S)-4-amino-5-oxopentanoate + tRNA(Glu) + NADP(+) = L-glutamyl-tRNA(Glu) + NADPH + H(+). Its pathway is porphyrin-containing compound metabolism; protoporphyrin-IX biosynthesis; 5-aminolevulinate from L-glutamyl-tRNA(Glu): step 1/2. In terms of biological role, catalyzes the NADPH-dependent reduction of glutamyl-tRNA(Glu) to glutamate 1-semialdehyde (GSA). The sequence is that of Glutamyl-tRNA reductase from Staphylococcus haemolyticus (strain JCSC1435).